A 176-amino-acid chain; its full sequence is Large ribosomal subunit protein uL10 (176 aa).

This sequence belongs to the universal ribosomal protein uL10 family. In terms of assembly, part of the ribosomal stalk of the 50S ribosomal subunit. The N-terminus interacts with L11 and the large rRNA to form the base of the stalk. The C-terminus forms an elongated spine to which L12 dimers bind in a sequential fashion forming a multimeric L10(L12)X complex.

Functionally, forms part of the ribosomal stalk, playing a central role in the interaction of the ribosome with GTP-bound translation factors. This chain is Large ribosomal subunit protein uL10, found in Teredinibacter turnerae (strain ATCC 39867 / T7901).